Reading from the N-terminus, the 490-residue chain is ABC transporter ATP-binding protein ModF (490 aa).

ABC transporter domains lie at 4 to 235 and 261 to 489; these read LQIL…AHSE and IVLN…LTKI. Residues 36–43 and 293–300 contribute to the ATP site; these read GSNGSGKS and GPNGAGKS.

The protein belongs to the ABC transporter superfamily.

It is found in the cell inner membrane. Its function is as follows. Probably not involved in the transport of molybdenum into the cell. This Escherichia coli (strain K12) protein is ABC transporter ATP-binding protein ModF (modF).